A 210-amino-acid polypeptide reads, in one-letter code: CASP-like protein 3A1 (210 aa).

At 1 to 44 the chain is on the cytoplasmic side; it reads MNGLKTPPEIGIQLPEAKVAAETGTMSGPLVPPRSDRSVRRGTD. A helical membrane pass occupies residues 45-65; that stretch reads VAHVVLRFVCLLTSVIALSLM. Residues 66-94 lie on the Extracellular side of the membrane; the sequence is ATAKEAASISIYGFLLPVSSKWSFSDSFE. A helical transmembrane segment spans residues 95–115; that stretch reads YLVGVSAAVAAHALLQLIISV. Residues 116–130 lie on the Cytoplasmic side of the membrane; the sequence is SRLLRKSPVIPSRNH. The helical transmembrane segment at 131 to 151 threads the bilayer; it reads AWLIFAGDQAFAYAMLSAGSA. Over 152–185 the chain is Extracellular; sequence ASGVTNLNRTGIRHSPLPNFCKPLRSFCDHVAAS. The N-linked (GlcNAc...) asparagine glycan is linked to Asn-159. The chain crosses the membrane as a helical span at residues 186–206; that stretch reads IAFTFFSCFLLATSAILDVIW. Residues 207–210 are Cytoplasmic-facing; sequence LSKY.

Belongs to the Casparian strip membrane proteins (CASP) family. In terms of assembly, homodimer and heterodimers.

It localises to the cell membrane. The sequence is that of CASP-like protein 3A1 from Vitis vinifera (Grape).